We begin with the raw amino-acid sequence, 406 residues long: RING finger protein PSH1 (406 aa).

The segment at 30–72 adopts an RING-type zinc-finger fold; it reads CSICHDYMFVPMMTPCGHNYCYGCLNTWFASNTQKELACPQCR. A phosphoserine mark is found at serine 143 and serine 191. Residues 209–406 are disordered; sequence RFASTNPFAN…RVVLGDSDDE (198 aa). Composition is skewed to acidic residues over residues 223-232, 256-274, and 281-291; these read SSEDDDSSEE, AVDDEDDEEEDEEEEEEMD, and IEDDEDDEDED. Threonine 310 bears the Phosphothreonine mark. At serine 403 the chain carries Phosphoserine.

As to quaternary structure, interacts with POB3 and SPT16.

It is found in the nucleus. This is RING finger protein PSH1 (PSH1) from Saccharomyces cerevisiae (strain ATCC 204508 / S288c) (Baker's yeast).